Reading from the N-terminus, the 236-residue chain is Orotidine 5'-phosphate decarboxylase (236 aa).

Substrate-binding positions include aspartate 17, lysine 39, 66-75 (DLKFYDIPNT), threonine 125, arginine 187, glutamine 196, glycine 216, and arginine 217. The Proton donor role is filled by lysine 68.

Belongs to the OMP decarboxylase family. Type 1 subfamily. As to quaternary structure, homodimer.

It catalyses the reaction orotidine 5'-phosphate + H(+) = UMP + CO2. It participates in pyrimidine metabolism; UMP biosynthesis via de novo pathway; UMP from orotate: step 2/2. In terms of biological role, catalyzes the decarboxylation of orotidine 5'-monophosphate (OMP) to uridine 5'-monophosphate (UMP). The chain is Orotidine 5'-phosphate decarboxylase from Buchnera aphidicola subsp. Baizongia pistaciae (strain Bp).